A 340-amino-acid chain; its full sequence is Beta-ketoacyl-[acyl-carrier-protein] synthase III (340 aa).

Residues cysteine 119 and histidine 260 contribute to the active site. Positions glutamine 261–arginine 265 are ACP-binding. Residue asparagine 290 is part of the active site.

This sequence belongs to the thiolase-like superfamily. FabH family. As to quaternary structure, homodimer.

The protein resides in the cytoplasm. The catalysed reaction is malonyl-[ACP] + acetyl-CoA + H(+) = 3-oxobutanoyl-[ACP] + CO2 + CoA. Its pathway is lipid metabolism; fatty acid biosynthesis. Catalyzes the condensation reaction of fatty acid synthesis by the addition to an acyl acceptor of two carbons from malonyl-ACP. Catalyzes the first condensation reaction which initiates fatty acid synthesis and may therefore play a role in governing the total rate of fatty acid production. Possesses both acetoacetyl-ACP synthase and acetyl transacylase activities. Its substrate specificity determines the biosynthesis of branched-chain and/or straight-chain of fatty acids. In Sulfurovum sp. (strain NBC37-1), this protein is Beta-ketoacyl-[acyl-carrier-protein] synthase III.